The following is a 150-amino-acid chain: Transcriptional regulator MraZ (150 aa).

2 consecutive SpoVT-AbrB domains span residues 5–51 and 80–123; these read VANL…PQPE and ATEC…DEDT.

This sequence belongs to the MraZ family. Forms oligomers.

The protein localises to the cytoplasm. Its subcellular location is the nucleoid. This chain is Transcriptional regulator MraZ, found in Thioalkalivibrio sulfidiphilus (strain HL-EbGR7).